The chain runs to 227 residues: PKHD-type hydroxylase NE2125 (227 aa).

The region spanning 78-179 is the Fe2OG dioxygenase domain; that stretch reads KIVPPFFNRY…RLACFMFIQS (102 aa). Positions 97, 99, and 160 each coordinate Fe cation. Arg170 lines the 2-oxoglutarate pocket.

Requires Fe(2+) as cofactor. L-ascorbate serves as cofactor.

In Nitrosomonas europaea (strain ATCC 19718 / CIP 103999 / KCTC 2705 / NBRC 14298), this protein is PKHD-type hydroxylase NE2125.